A 564-amino-acid chain; its full sequence is Dihydroxy-acid dehydratase (564 aa).

D80 is a Mg(2+) binding site. C121 contributes to the [2Fe-2S] cluster binding site. D122 and K123 together coordinate Mg(2+). An N6-carboxylysine modification is found at K123. C194 serves as a coordination point for [2Fe-2S] cluster. Residue E447 coordinates Mg(2+). The Proton acceptor role is filled by S473.

This sequence belongs to the IlvD/Edd family. Homodimer. It depends on [2Fe-2S] cluster as a cofactor. Mg(2+) serves as cofactor.

The catalysed reaction is (2R)-2,3-dihydroxy-3-methylbutanoate = 3-methyl-2-oxobutanoate + H2O. It catalyses the reaction (2R,3R)-2,3-dihydroxy-3-methylpentanoate = (S)-3-methyl-2-oxopentanoate + H2O. It participates in amino-acid biosynthesis; L-isoleucine biosynthesis; L-isoleucine from 2-oxobutanoate: step 3/4. Its pathway is amino-acid biosynthesis; L-valine biosynthesis; L-valine from pyruvate: step 3/4. Its function is as follows. Functions in the biosynthesis of branched-chain amino acids. Catalyzes the dehydration of (2R,3R)-2,3-dihydroxy-3-methylpentanoate (2,3-dihydroxy-3-methylvalerate) into 2-oxo-3-methylpentanoate (2-oxo-3-methylvalerate) and of (2R)-2,3-dihydroxy-3-methylbutanoate (2,3-dihydroxyisovalerate) into 2-oxo-3-methylbutanoate (2-oxoisovalerate), the penultimate precursor to L-isoleucine and L-valine, respectively. In Listeria monocytogenes serotype 4b (strain CLIP80459), this protein is Dihydroxy-acid dehydratase.